The sequence spans 132 residues: Small ribosomal subunit protein uS8 (132 aa).

The protein belongs to the universal ribosomal protein uS8 family. In terms of assembly, part of the 30S ribosomal subunit. Contacts proteins S5 and S12.

One of the primary rRNA binding proteins, it binds directly to 16S rRNA central domain where it helps coordinate assembly of the platform of the 30S subunit. The polypeptide is Small ribosomal subunit protein uS8 (Rickettsia canadensis (strain McKiel)).